The following is a 616-amino-acid chain: MCGIVGYVGTDKSLEVLLGGLKRLEYRGYDSAGIAVIAPDGSLATAKRAGKLDVLTDELQQHPIPDGGTGIGHTRWATHGGPTDCNAHPHLGDDGRLAVIHNGIIENFATLRDELLAEEFTFESETDTEVAAVLLGREYRAAGSLSEAFQRVVSRLEGAFTLLALHQDQPHVVVGARRNSPLVIGLGEGENFLGSDVAAFVEHTQRALAIGQDQIVTITPEQVTVTDFAGAPVEVEPFDVAWDATAAEKGGWPSFMAKEIAEEPDAVANTLRGRAADGAVHIPELDALGDEFFLGIDQITIVACGTAAYAGLVGSYAIEKWARVPVTVELSHEFRYREPVISGGTLIVSISQSGETMDTLMAVKYAREAGAKAISVCNTQGATIPRESDAALYTHAGPEVAVASTKAFVGQIAALYLFGLSLARVRGTLSAAQQRDAVAELFAVPEKIRAVLESKDTIAQLAHWMSDTRSVLFLGRHVGYPIALEGALKLKELAYIHAEGFAAGELKHGPIALIEPGQPVFVVVPSPRWSDELHKKVVSNIQEIRARGARVIAIAEAGDAAVLPFADEVIRIPLAAPLFEPLLSVIPLQIFAMELAVAKGLDVDQPRNLAKSVTVE.

The active-site Nucleophile; for GATase activity is Cys-2. The 220-residue stretch at 2–221 folds into the Glutamine amidotransferase type-2 domain; sequence CGIVGYVGTD…QDQIVTITPE (220 aa). 2 SIS domains span residues 288-428 and 461-606; these read LGDE…VRGT and LAHW…VDQP. Catalysis depends on Lys-611, which acts as the For Fru-6P isomerization activity.

As to quaternary structure, homodimer.

The protein resides in the cytoplasm. The catalysed reaction is D-fructose 6-phosphate + L-glutamine = D-glucosamine 6-phosphate + L-glutamate. Functionally, catalyzes the first step in hexosamine metabolism, converting fructose-6P into glucosamine-6P using glutamine as a nitrogen source. This chain is Glutamine--fructose-6-phosphate aminotransferase [isomerizing], found in Leifsonia xyli subsp. xyli (strain CTCB07).